We begin with the raw amino-acid sequence, 308 residues long: Acetaldehyde dehydrogenase 2 (308 aa).

9–12 (SGNI) is a binding site for NAD(+). Cys-127 acts as the Acyl-thioester intermediate in catalysis. NAD(+) contacts are provided by residues 158 to 166 (SAGPGTRAN) and Asn-286.

Belongs to the acetaldehyde dehydrogenase family.

The enzyme catalyses acetaldehyde + NAD(+) + CoA = acetyl-CoA + NADH + H(+). The protein is Acetaldehyde dehydrogenase 2 of Parafrankia sp. (strain EAN1pec).